The chain runs to 200 residues: Tegument protein UL55 homolog (200 aa).

Basic and acidic residues predominate over residues 1 to 20 (MLPANRAEHSSDAEPRDIGS). Residues 1-23 (MLPANRAEHSSDAEPRDIGSHGR) are disordered.

The protein belongs to the alphaherpesvirinae HHV-1 UL55 family.

The protein localises to the virion tegument. Its subcellular location is the host nucleus matrix. In Equine herpesvirus 1 (strain Ab4p) (EHV-1), this protein is Tegument protein UL55 homolog.